The primary structure comprises 300 residues: Ribosomal protein L11 methyltransferase (300 aa).

S-adenosyl-L-methionine contacts are provided by threonine 152, glycine 173, aspartate 195, and asparagine 234.

The protein belongs to the methyltransferase superfamily. PrmA family.

It localises to the cytoplasm. It carries out the reaction L-lysyl-[protein] + 3 S-adenosyl-L-methionine = N(6),N(6),N(6)-trimethyl-L-lysyl-[protein] + 3 S-adenosyl-L-homocysteine + 3 H(+). Its function is as follows. Methylates ribosomal protein L11. The polypeptide is Ribosomal protein L11 methyltransferase (Burkholderia pseudomallei (strain 1710b)).